A 263-amino-acid chain; its full sequence is MTDNAPRIHPTAVIDPAARLADDVQVGAFTLIGADVEIGAGTVVGPHCSIHGPTRIGRDNRFIGHAAIGGEPQDKKFAGERTELVIGDRNVFREFVTLNRGTGGGGGITTIGNDNWMLAYTHVAHDCHVGNFCVFSNNTTLAGHVTVGDYVIISGFAGAHQFCRIGAHAFLGMGALTNGDVPPFTMVGTDSLGRPRGINSEGLKRRGFDAERISAIKRAYRTLYVAGLPLAEAKVQLTEQARDSDDVKAMLDFIEHAERPLLR.

This sequence belongs to the transferase hexapeptide repeat family. LpxA subfamily. In terms of assembly, homotrimer.

It is found in the cytoplasm. The catalysed reaction is a (3R)-hydroxyacyl-[ACP] + UDP-N-acetyl-alpha-D-glucosamine = a UDP-3-O-[(3R)-3-hydroxyacyl]-N-acetyl-alpha-D-glucosamine + holo-[ACP]. It functions in the pathway glycolipid biosynthesis; lipid IV(A) biosynthesis; lipid IV(A) from (3R)-3-hydroxytetradecanoyl-[acyl-carrier-protein] and UDP-N-acetyl-alpha-D-glucosamine: step 1/6. Functionally, involved in the biosynthesis of lipid A, a phosphorylated glycolipid that anchors the lipopolysaccharide to the outer membrane of the cell. In Stenotrophomonas maltophilia (strain K279a), this protein is Acyl-[acyl-carrier-protein]--UDP-N-acetylglucosamine O-acyltransferase.